We begin with the raw amino-acid sequence, 742 residues long: Phosphoribosylformylglycinamidine synthase subunit PurL (742 aa).

Residue histidine 54 is part of the active site. ATP-binding residues include tyrosine 57 and lysine 96. Glutamate 98 contacts Mg(2+). Residues 99-102 (SHNH) and arginine 121 each bind substrate. Catalysis depends on histidine 100, which acts as the Proton acceptor. Aspartate 122 contacts Mg(2+). Residue glutamine 245 coordinates substrate. Aspartate 273 contributes to the Mg(2+) binding site. 317–319 (ESQ) is a substrate binding site. Residues aspartate 500 and glycine 537 each coordinate ATP. Asparagine 538 lines the Mg(2+) pocket. Serine 540 lines the substrate pocket.

Belongs to the FGAMS family. Monomer. Part of the FGAM synthase complex composed of 1 PurL, 1 PurQ and 2 PurS subunits.

The protein localises to the cytoplasm. It carries out the reaction N(2)-formyl-N(1)-(5-phospho-beta-D-ribosyl)glycinamide + L-glutamine + ATP + H2O = 2-formamido-N(1)-(5-O-phospho-beta-D-ribosyl)acetamidine + L-glutamate + ADP + phosphate + H(+). Its pathway is purine metabolism; IMP biosynthesis via de novo pathway; 5-amino-1-(5-phospho-D-ribosyl)imidazole from N(2)-formyl-N(1)-(5-phospho-D-ribosyl)glycinamide: step 1/2. Its function is as follows. Part of the phosphoribosylformylglycinamidine synthase complex involved in the purines biosynthetic pathway. Catalyzes the ATP-dependent conversion of formylglycinamide ribonucleotide (FGAR) and glutamine to yield formylglycinamidine ribonucleotide (FGAM) and glutamate. The FGAM synthase complex is composed of three subunits. PurQ produces an ammonia molecule by converting glutamine to glutamate. PurL transfers the ammonia molecule to FGAR to form FGAM in an ATP-dependent manner. PurS interacts with PurQ and PurL and is thought to assist in the transfer of the ammonia molecule from PurQ to PurL. The polypeptide is Phosphoribosylformylglycinamidine synthase subunit PurL (Geobacillus kaustophilus (strain HTA426)).